The sequence spans 430 residues: Enolase (430 aa).

Residue Q163 participates in (2R)-2-phosphoglycerate binding. The active-site Proton donor is E205. Residues D242, E285, and D312 each coordinate Mg(2+). Positions 337, 366, 367, and 388 each coordinate (2R)-2-phosphoglycerate. The active-site Proton acceptor is the K337.

It belongs to the enolase family. It depends on Mg(2+) as a cofactor.

It is found in the cytoplasm. Its subcellular location is the secreted. The protein resides in the cell surface. The enzyme catalyses (2R)-2-phosphoglycerate = phosphoenolpyruvate + H2O. It functions in the pathway carbohydrate degradation; glycolysis; pyruvate from D-glyceraldehyde 3-phosphate: step 4/5. In terms of biological role, catalyzes the reversible conversion of 2-phosphoglycerate (2-PG) into phosphoenolpyruvate (PEP). It is essential for the degradation of carbohydrates via glycolysis. The sequence is that of Enolase from Rubrobacter xylanophilus (strain DSM 9941 / JCM 11954 / NBRC 16129 / PRD-1).